Reading from the N-terminus, the 455-residue chain is N(6)-adenosine-methyltransferase non-catalytic subunit METTL14 (455 aa).

The segment at 21 to 96 (QQLGAESPDS…QHQEESGPYE (76 aa)) is disordered. The span at 37-51 (SKDEQKEIEETRETC) shows a compositional bias: basic and acidic residues. The segment covering 69-82 (EGEDPEEDVEEQKE) has biased composition (acidic residues). Interaction with METTL3 regions lie at residues 134–135 (RD) and 236–237 (SG). The segment at 244 to 253 (RMCLRKWGFR) is positively charged region required for RNA-binding. Interaction with METTL3 regions lie at residues 254-257 (RCED) and 277-286 (KAVFQRTKEH). A positively charged region required for RNA-binding region spans residues 296–297 (RR). The tract at residues 307–311 (NVDID) is interaction with METTL3. Residues 392-455 (ERLRPKSPPP…GGPHRGFPPR (64 aa)) form a disordered region. Residues 407 to 421 (RGGGAPRGGRGGPAA) show a composition bias toward gly residues. A compositionally biased stretch (basic and acidic residues) spans 423–441 (RGDRGRERNRPNFRGDRGG).

This sequence belongs to the MT-A70-like family. In terms of assembly, heterodimer; heterodimerizes with mettl3 to form an antiparallel heterodimer that constitutes an active methyltransferase. Component of the WMM complex, a N6-methyltransferase complex composed of a catalytic subcomplex, named MAC, and of an associated subcomplex, named MACOM. The MAC subcomplex is composed of mettl3 and mettl14.

It localises to the nucleus. In terms of biological role, the METTL3-METTL14 heterodimer forms a N6-methyltransferase complex that methylates adenosine residues at the N(6) position of some mRNAs and regulates the circadian clock, differentiation of embryonic stem cells and cortical neurogenesis. In the heterodimer formed with mettl3, mettl14 constitutes the RNA-binding scaffold that recognizes the substrate rather than the catalytic core. N6-methyladenosine (m6A), which takes place at the 5'-[AG]GAC-3' consensus sites of some mRNAs, plays a role in mRNA stability and processing. This chain is N(6)-adenosine-methyltransferase non-catalytic subunit METTL14 (mettl14), found in Danio rerio (Zebrafish).